The chain runs to 314 residues: 2,3-dihydroxyphenylpropionate/2,3-dihydroxicinnamic acid 1,2-dioxygenase (314 aa).

Catalysis depends on His-115, which acts as the Proton donor. Residue His-179 is the Proton acceptor of the active site.

Belongs to the LigB/MhpB extradiol dioxygenase family. Homotetramer. The cofactor is Fe(2+).

It carries out the reaction 3-(2,3-dihydroxyphenyl)propanoate + O2 = (2Z,4E)-2-hydroxy-6-oxonona-2,4-dienedioate + H(+). It catalyses the reaction (2E)-3-(2,3-dihydroxyphenyl)prop-2-enoate + O2 = (2Z,4E,7E)-2-hydroxy-6-oxonona-2,4,7-trienedioate + H(+). It participates in aromatic compound metabolism; 3-phenylpropanoate degradation. In terms of biological role, catalyzes the non-heme iron(II)-dependent oxidative cleavage of 2,3-dihydroxyphenylpropionic acid and 2,3-dihydroxicinnamic acid into 2-hydroxy-6-ketononadienedioate and 2-hydroxy-6-ketononatrienedioate, respectively. This chain is 2,3-dihydroxyphenylpropionate/2,3-dihydroxicinnamic acid 1,2-dioxygenase, found in Escherichia coli O81 (strain ED1a).